The sequence spans 416 residues: Isobutyryl-CoA dehydrogenase, mitochondrial (416 aa).

The transit peptide at 1-21 (MISGLFKLSNKQSVLQNATKL) directs the protein to the mitochondrion. FAD contacts are provided by residues 156-165 (YCLTEPGSGS) and 189-191 (FIS). S165 provides a ligand contact to substrate. Residue 273 to 276 (NGGR) coordinates substrate. Residues R301, 311–312 (FQ), and 370–374 (QLFGG) contribute to the FAD site. E397 functions as the Proton acceptor in the catalytic mechanism. Position 399–401 (399–401 (SDA)) interacts with FAD. Position 409 (R409) interacts with substrate.

This sequence belongs to the acyl-CoA dehydrogenase family. In terms of assembly, homotetramer. The cofactor is FAD.

Its subcellular location is the mitochondrion. The enzyme catalyses 2-methylpropanoyl-CoA + oxidized [electron-transfer flavoprotein] + H(+) = 2-methylpropenoyl-CoA + reduced [electron-transfer flavoprotein]. The catalysed reaction is (2S)-2-methylbutanoyl-CoA + oxidized [electron-transfer flavoprotein] + H(+) = (2E)-2-methylbut-2-enoyl-CoA + reduced [electron-transfer flavoprotein]. It carries out the reaction propanoyl-CoA + oxidized [electron-transfer flavoprotein] + H(+) = acryloyl-CoA + reduced [electron-transfer flavoprotein]. It participates in amino-acid degradation; L-valine degradation. Isobutyryl-CoA dehydrogenase which catalyzes one of the steps of the valine catabolic pathway. To a lesser extent, is also able to catalyze the oxidation of (2S)-2-methylbutanoyl-CoA. The protein is Isobutyryl-CoA dehydrogenase, mitochondrial (acad8) of Dictyostelium discoideum (Social amoeba).